The primary structure comprises 1159 residues: Caspase recruitment domain-containing protein 11 (1159 aa).

In terms of domain architecture, CARD spans 18–110 (EEEALWDNVE…ELYKLVTGKE (93 aa)). A linker region spans residues 111-128 (PTRRFSTIVVEEGHEGLT). A coiled-coil region spans residues 176 to 449 (FQERYYKMKE…KDNGSLDQSL (274 aa)). The tract at residues 441 to 496 (DNGSLDQSLPRHLPATIISQNLGDTSPRTNGQEADDSSTSEESPEDSKYFLPYHPP) is disordered. Phosphoserine is present on residues serine 448 and serine 466. The tract at residues 450–671 (PRHLPATIIS…GHVRGTGPLV (222 aa)) is inhibitory domain (ID). Positions 457 to 472 (IISQNLGDTSPRTNGQ) are enriched in polar residues. Residues 473 to 484 (EADDSSTSEESP) show a composition bias toward acidic residues. Residues serine 512 and serine 540 each carry the phosphoserine modification. A disordered region spans residues 532 to 578 (HEEDFTDGSPSSSRSLPVTSSFSKMQPHRSRSSIMSITAEPPGNDSI). Over residues 540–554 (SPSSSRSLPVTSSFS) the composition is skewed to low complexity. Position 564 is a phosphoserine; by PKC/PRKCB and PKC/PRKCQ (serine 564). The residue at position 598 (serine 598) is a Phosphoserine. The disordered stretch occupies residues 610-631 (NHERYSFGPPSIHSSSSSHQSE). Residues 620 to 630 (SIHSSSSSHQS) show a composition bias toward low complexity. 2 positions are modified to phosphoserine; by PKC/PRKCB and PKC/PRKCQ: serine 649 and serine 657. The region spanning 672 to 760 (QHTTLNGDGL…LITLHYKVNH (89 aa)) is the PDZ domain. Serine 891 and serine 930 each carry phosphoserine. A Guanylate kinase-like domain is found at 978–1145 (RRRPVLFTPT…LLRVLKDKIV (168 aa)).

As to quaternary structure, homodimer; disulfide-linked. Homomultimer; polymerizes following activation, forming a nucleating helical template that seeds BCL10-filament formation via a CARD-CARD interaction. Interacts (via CARD domain) with BCL10 (via CARD domain); interaction takes place following CARD11 activation and polymerization, leading to the formation of a filamentous CBM complex assembly. Component of a CBM complex (CARD11-BCL10-MALT1) complex involved in NF-kappa-B activation. Found in a membrane raft complex, at least composed of BCL10, CARD11, DPP4 and IKBKB. Interacts (via PDZ domain) with DPP4 (via cytoplasmic tail). Phosphorylation at Ser-564, Ser-649 and Ser-657 by PRKCB and PRKCQ leads to a shift from an inactive to an active form that activates the NF-kappa-B signaling.

It localises to the cytoplasm. The protein localises to the membrane raft. With respect to regulation, maintained in an autoinhibited state via homodimerization in which the CARD domain forms an extensive interaction with the adjacent linker and coiled-coil regions. Activation downstream of T-cell receptor (TCR) by phosphorylation by PRKCB and PRKCQ triggers CARD11 homooligomerization and BCL10 recruitment, followed by activation of NF-kappa-B. Functionally, adapter protein that plays a key role in adaptive immune response by transducing the activation of NF-kappa-B downstream of T-cell receptor (TCR) and B-cell receptor (BCR) engagement. Transduces signals downstream TCR or BCR activation via the formation of a multiprotein complex together with BCL10 and MALT1 that induces NF-kappa-B and MAP kinase p38 (MAPK11, MAPK12, MAPK13 and/or MAPK14) pathways. Upon activation in response to TCR or BCR triggering, CARD11 homooligomerizes to form a nucleating helical template that recruits BCL10 via CARD-CARD interaction, thereby promoting polymerization of BCL10 and subsequent recruitment of MALT1: this leads to I-kappa-B kinase (IKK) phosphorylation and degradation, and release of NF-kappa-B proteins for nuclear translocation. Its binding to DPP4 induces T-cell proliferation and NF-kappa-B activation in a T-cell receptor/CD3-dependent manner. Promotes linear ubiquitination of BCL10 by promoting the targeting of BCL10 to RNF31/HOIP. Stimulates the phosphorylation of BCL10. Also activates the TORC1 signaling pathway. The polypeptide is Caspase recruitment domain-containing protein 11 (Mus musculus (Mouse)).